The primary structure comprises 671 residues: DNA ligase (671 aa).

NAD(+) contacts are provided by residues 32–36 (DAEYD), 81–82 (SL), and Glu-113. The N6-AMP-lysine intermediate role is filled by Lys-115. The NAD(+) site is built by Arg-136, Glu-173, Lys-290, and Lys-314. Zn(2+) is bound by residues Cys-408, Cys-411, Cys-426, and Cys-432. The 79-residue stretch at 593-671 (EIDSPFAGKT…EAEMIRLLGA (79 aa)) folds into the BRCT domain.

It belongs to the NAD-dependent DNA ligase family. LigA subfamily. The cofactor is Mg(2+). Mn(2+) serves as cofactor.

The enzyme catalyses NAD(+) + (deoxyribonucleotide)n-3'-hydroxyl + 5'-phospho-(deoxyribonucleotide)m = (deoxyribonucleotide)n+m + AMP + beta-nicotinamide D-nucleotide.. In terms of biological role, DNA ligase that catalyzes the formation of phosphodiester linkages between 5'-phosphoryl and 3'-hydroxyl groups in double-stranded DNA using NAD as a coenzyme and as the energy source for the reaction. It is essential for DNA replication and repair of damaged DNA. The chain is DNA ligase from Salmonella newport (strain SL254).